The primary structure comprises 265 residues: Homeobox protein engrailed-2-A (265 aa).

2 stretches are compositionally biased toward basic and acidic residues: residues 1-12 (MEENEQNNREVE) and 102-115 (GEKK…ETLK). Disordered stretches follow at residues 1-38 (MEEN…QPHH), 75-140 (LSGA…KATQ), and 156-181 (DRPS…RPRT). Residues 122 to 136 (DHSLSSDSDSSQTSS) show a composition bias toward low complexity. Residues 176-235 (DKRPRTAFTADQLQRLKAEFQTNRYLTEQRRQSLAQELSLNESQIKIWFQNKRAKIKKAT) constitute a DNA-binding region (homeobox).

Belongs to the engrailed homeobox family.

The protein localises to the nucleus. The chain is Homeobox protein engrailed-2-A (en2-a) from Xenopus laevis (African clawed frog).